A 599-amino-acid polypeptide reads, in one-letter code: Translation initiation factor IF-2 (599 aa).

One can recognise a tr-type G domain in the interval 111 to 278 (PRPPIITVMG…SILLLAEILE (168 aa)). Positions 120-127 (GHVDHGKT) are G1. Residue 120 to 127 (GHVDHGKT) participates in GTP binding. Residues 145–149 (GITQH) form a G2 region. The tract at residues 166–169 (DTPG) is G3. GTP contacts are provided by residues 166–170 (DTPGH) and 220–223 (NKMD). The tract at residues 220–223 (NKMD) is G4. The G5 stretch occupies residues 256–258 (SAL).

Belongs to the TRAFAC class translation factor GTPase superfamily. Classic translation factor GTPase family. IF-2 subfamily.

Its subcellular location is the cytoplasm. Its function is as follows. One of the essential components for the initiation of protein synthesis. Protects formylmethionyl-tRNA from spontaneous hydrolysis and promotes its binding to the 30S ribosomal subunits. Also involved in the hydrolysis of GTP during the formation of the 70S ribosomal complex. This Mesomycoplasma hyopneumoniae (strain 232) (Mycoplasma hyopneumoniae) protein is Translation initiation factor IF-2.